The following is a 181-amino-acid chain: Sodium/potassium-transporting ATPase subunit beta-1-interacting protein 3 (181 aa).

4 helical membrane-spanning segments follow: residues 5–22, 35–55, 62–82, and 151–171; these read TGRCTLIFICTLQMLVAL, APILGNFLHIIVVILGLFGTI, IVAYTIWTAFWVAWNVFIICF, and AVQILLSLIGFVYACYVISVI.

The protein belongs to the NKAIN family. Interacts with atp1b1 C-terminus.

The protein resides in the cell membrane. This chain is Sodium/potassium-transporting ATPase subunit beta-1-interacting protein 3 (nkain3), found in Xenopus tropicalis (Western clawed frog).